A 287-amino-acid chain; its full sequence is Protease HtpX (287 aa).

2 consecutive transmembrane segments (helical) span residues 4–24 (IFLL…VMSI) and 33–53 (GGLL…SLAI). Position 139 (histidine 139) interacts with Zn(2+). Glutamate 140 is an active-site residue. Histidine 143 lines the Zn(2+) pocket. 2 consecutive transmembrane segments (helical) span residues 154-174 (LIQG…AGII) and 195-215 (AVVF…VAYF). A Zn(2+)-binding site is contributed by glutamate 220.

Belongs to the peptidase M48B family. The cofactor is Zn(2+).

The protein resides in the cell inner membrane. The chain is Protease HtpX from Shewanella baltica (strain OS223).